The sequence spans 245 residues: tRNA pseudouridine synthase A (245 aa).

Catalysis depends on D52, which acts as the Nucleophile. Residue Y111 participates in substrate binding.

It belongs to the tRNA pseudouridine synthase TruA family. As to quaternary structure, homodimer.

It carries out the reaction uridine(38/39/40) in tRNA = pseudouridine(38/39/40) in tRNA. Functionally, formation of pseudouridine at positions 38, 39 and 40 in the anticodon stem and loop of transfer RNAs. The chain is tRNA pseudouridine synthase A from Rickettsia africae (strain ESF-5).